We begin with the raw amino-acid sequence, 168 residues long: Chemoreceptor glutamine deamidase CheD (168 aa).

Belongs to the CheD family. In terms of assembly, forms a complex with CheC.

It carries out the reaction L-glutaminyl-[protein] + H2O = L-glutamyl-[protein] + NH4(+). In terms of biological role, deamidates glutamine residues to glutamate on methyl-accepting chemotaxis receptors (MCPs). CheD-mediated MCP deamidation is required for productive communication of the conformational signals of the chemoreceptors to the CheA kinase. This Bacillus licheniformis (strain ATCC 14580 / DSM 13 / JCM 2505 / CCUG 7422 / NBRC 12200 / NCIMB 9375 / NCTC 10341 / NRRL NRS-1264 / Gibson 46) protein is Chemoreceptor glutamine deamidase CheD.